The sequence spans 68 residues: ATP synthase F(0) complex subunit 8 (68 aa).

Residues 8-24 (VWPTMIAPMLLTLFLIT) traverse the membrane as a helical segment. At Lys54 the chain carries N6-acetyllysine; alternate. Lys54 carries the post-translational modification N6-succinyllysine; alternate. N6-acetyllysine is present on Lys57.

The protein belongs to the ATPase protein 8 family. Component of the ATP synthase complex composed at least of ATP5F1A/subunit alpha, ATP5F1B/subunit beta, ATP5MC1/subunit c (homooctomer), MT-ATP6/subunit a, MT-ATP8/subunit 8, ATP5ME/subunit e, ATP5MF/subunit f, ATP5MG/subunit g, ATP5MK/subunit k, ATP5MJ/subunit j, ATP5F1C/subunit gamma, ATP5F1D/subunit delta, ATP5F1E/subunit epsilon, ATP5PF/subunit F6, ATP5PB/subunit b, ATP5PD/subunit d, ATP5PO/subunit OSCP. ATP synthase complex consists of a soluble F(1) head domain (subunits alpha(3) and beta(3)) - the catalytic core - and a membrane F(0) domain - the membrane proton channel (subunits c, a, 8, e, f, g, k and j). These two domains are linked by a central stalk (subunits gamma, delta, and epsilon) rotating inside the F1 region and a stationary peripheral stalk (subunits F6, b, d, and OSCP). Interacts with PRICKLE3.

The protein resides in the mitochondrion membrane. Functionally, subunit 8, of the mitochondrial membrane ATP synthase complex (F(1)F(0) ATP synthase or Complex V) that produces ATP from ADP in the presence of a proton gradient across the membrane which is generated by electron transport complexes of the respiratory chain. ATP synthase complex consist of a soluble F(1) head domain - the catalytic core - and a membrane F(1) domain - the membrane proton channel. These two domains are linked by a central stalk rotating inside the F(1) region and a stationary peripheral stalk. During catalysis, ATP synthesis in the catalytic domain of F(1) is coupled via a rotary mechanism of the central stalk subunits to proton translocation. In vivo, can only synthesize ATP although its ATP hydrolase activity can be activated artificially in vitro. Part of the complex F(0) domain. This is ATP synthase F(0) complex subunit 8 from Gorilla gorilla gorilla (Western lowland gorilla).